The sequence spans 359 residues: UDP-N-acetylglucosamine--N-acetylmuramyl-(pentapeptide) pyrophosphoryl-undecaprenol N-acetylglucosamine transferase (359 aa).

Residues 15-17, N127, R166, S191, I245, 264-269, and Q290 each bind UDP-N-acetyl-alpha-D-glucosamine; these read TGG and ALTVSE.

It belongs to the glycosyltransferase 28 family. MurG subfamily.

The protein localises to the cell inner membrane. It catalyses the reaction di-trans,octa-cis-undecaprenyl diphospho-N-acetyl-alpha-D-muramoyl-L-alanyl-D-glutamyl-meso-2,6-diaminopimeloyl-D-alanyl-D-alanine + UDP-N-acetyl-alpha-D-glucosamine = di-trans,octa-cis-undecaprenyl diphospho-[N-acetyl-alpha-D-glucosaminyl-(1-&gt;4)]-N-acetyl-alpha-D-muramoyl-L-alanyl-D-glutamyl-meso-2,6-diaminopimeloyl-D-alanyl-D-alanine + UDP + H(+). The protein operates within cell wall biogenesis; peptidoglycan biosynthesis. Its function is as follows. Cell wall formation. Catalyzes the transfer of a GlcNAc subunit on undecaprenyl-pyrophosphoryl-MurNAc-pentapeptide (lipid intermediate I) to form undecaprenyl-pyrophosphoryl-MurNAc-(pentapeptide)GlcNAc (lipid intermediate II). The chain is UDP-N-acetylglucosamine--N-acetylmuramyl-(pentapeptide) pyrophosphoryl-undecaprenol N-acetylglucosamine transferase from Pseudomonas putida (strain ATCC 700007 / DSM 6899 / JCM 31910 / BCRC 17059 / LMG 24140 / F1).